Reading from the N-terminus, the 476-residue chain is UDP-glucose 6-dehydrogenase (476 aa).

NAD(+) contacts are provided by residues 7-12, Asp32, Arg37, 85-89, 126-127, and Glu161; these read GAGYVG, VNTPT, and ST. Residues 157–161, 216–220, Arg256, and 263–269 contribute to the substrate site; these read EFLAE, KLAAN, and QASVGFG. The active-site Nucleophile is Cys272. NAD(+) is bound at residue 272–275; the sequence is CFQK. Residue 334–335 coordinates substrate; sequence FK. Arg342 contacts NAD(+). Arg439 is a binding site for substrate.

The protein belongs to the UDP-glucose/GDP-mannose dehydrogenase family.

The catalysed reaction is UDP-alpha-D-glucose + 2 NAD(+) + H2O = UDP-alpha-D-glucuronate + 2 NADH + 3 H(+). The protein operates within nucleotide-sugar biosynthesis; UDP-alpha-D-glucuronate biosynthesis; UDP-alpha-D-glucuronate from UDP-alpha-D-glucose: step 1/1. Functionally, involved in the biosynthesis of glycosaminoglycans; hyaluronan, chondroitin sulfate and heparan sulfate. Required for wingless signaling in different tissues. This chain is UDP-glucose 6-dehydrogenase (sgl), found in Drosophila melanogaster (Fruit fly).